A 315-amino-acid polypeptide reads, in one-letter code: uncharacterized protein (315 aa).

This is an uncharacterized protein from Caenorhabditis elegans.